The following is a 491-amino-acid chain: CTD small phosphatase-like protein 1 (491 aa).

Disordered stretches follow at residues 1–53 (MTYA…SLDY), 140–198 (KLTK…TARR), 221–249 (KIQSSQRTNSTNNNHQNGRPSTPTNTGPP), and 261–282 (TVTGLPTTGQACQQNGSGDGVT). Residues 17 to 26 (VPPPRTPVGP) are compositionally biased toward pro residues. Residues 37–49 (SASQPLQPKNGAN) show a composition bias toward polar residues. Over residues 141–156 (LTKDEKNGGKMNRDGG) the composition is skewed to basic and acidic residues. Positions 176-187 (ASTPLNSFSANA) are enriched in polar residues. Positions 223 to 237 (QSSQRTNSTNNNHQN) are enriched in low complexity. Polar residues-rich tracts occupy residues 238–249 (GRPSTPTNTGPP) and 264–276 (GLPTTGQACQQNG). One can recognise an FCP1 homology domain in the interval 307-465 (QDSNKKCLVI…LDILPSLEHL (159 aa)). D317 functions as the 4-aspartylphosphate intermediate in the catalytic mechanism. 3 residues coordinate Mg(2+): D317, D319, and N428. D319 functions as the Proton donor in the catalytic mechanism.

In terms of assembly, may interact (via phosphatase domain) with cpna-1. Isoform a and isoform b may interact with lim-9 (via LIM zinc-binding domain). Isoform a and isoform b may interact (via FCP1 homology domain) with unc-89 (via fibronectin type-III domain 1, Ig-like C2-type domain 48/49 and protein kinase domain 1 or Ig-like C2-type domain 50, fibronectin type-III domain 2 and protein kinase domain 2); the interaction may act as a molecular bridge to bring two unc-89 molecules together or to stabilize a loop between the 2 protein kinase domains. Mg(2+) is required as a cofactor. In terms of tissue distribution, expressed in pharyngeal, vulval and body wall muscles.

Its subcellular location is the cytoplasm. The protein localises to the myofibril. It is found in the sarcomere. The protein resides in the m line. The catalysed reaction is O-phospho-L-seryl-[protein] + H2O = L-seryl-[protein] + phosphate. The enzyme catalyses O-phospho-L-threonyl-[protein] + H2O = L-threonyl-[protein] + phosphate. With respect to regulation, inhibited by beryllium trifluoride (BeF(3-)) and tetrafluoroaluminate (AlF(4-)) but not by sodium fluoride (NaF) or sodium orthovanadate (Na3VO4). Its function is as follows. Phosphatase which may play a role in the egg laying muscles. The sequence is that of CTD small phosphatase-like protein 1 from Caenorhabditis elegans.